Reading from the N-terminus, the 154-residue chain is Glycosylation-dependent cell adhesion molecule 1 (154 aa).

An N-terminal signal peptide occupies residues 1-18 (MKFLCILLLASLAATSLA). O-linked (GalNAc...) threonine; partial glycosylation occurs at Thr-34. A phosphoserine mark is found at Ser-48, Ser-53, Ser-57, Ser-59, and Ser-65. Over residues 51-65 (DLSKEPSISREDLIS) the composition is skewed to basic and acidic residues. Positions 51–115 (DLSKEPSISR…EHAPSDASTT (65 aa)) are disordered. The N-linked (GlcNAc...) asparagine glycan is linked to Asn-96.

The protein belongs to the PP3/GlyCAM-1 family. As to expression, highly and specifically expressed in the lactating mammary gland.

Its subcellular location is the membrane. This chain is Glycosylation-dependent cell adhesion molecule 1 (GLYCAM1), found in Capra hircus (Goat).